Reading from the N-terminus, the 290-residue chain is Picrinine-N-methytransferase (290 aa).

Residues 71–80 are SAM motif I; the sequence is MLDVGCGIGG. The Vacuolar targeting signal motif lies at 133–139; the sequence is DGTFDLV. The segment at 134–142 is SAM motif II; the sequence is GTFDLVFTI. An SAM motif III region spans residues 161–170; it reads VAAPGAPIVI.

This sequence belongs to the class I-like SAM-binding methyltransferase superfamily. gTMT family. Homodimer. In terms of tissue distribution, accumulates in tissues actively synthesizing monoterpenoid indole alkaloids (MIAs) (at protein level). Mainly expressed in young leaves and, to a lower extent, in roots and stems.

The protein resides in the vacuole membrane. The catalysed reaction is picrinine + S-adenosyl-L-methionine = ervincine + S-adenosyl-L-homocysteine + H(+). It functions in the pathway alkaloid biosynthesis; vindoline biosynthesis. In terms of biological role, S-adenosyl-L-methionine-dependent N-methyltransferase involved in the biosynthesis of biologically active monoterpenoid indole alkaloids (MIAs) natural products including vindoline. Catalyzes the conversion of picrinine to N-methylpicrinine (ervincine). Also accepts, with low efficiency, 21-hydroxycyclolochnericine and norajmaline as substrates. In Rauvolfia serpentina (Serpentine wood), this protein is Picrinine-N-methytransferase.